Consider the following 499-residue polypeptide: Rhamnogalacturonate lyase A (499 aa).

The first 20 residues, 1–20, serve as a signal peptide directing secretion; that stretch reads MLSKTSLLSLLSLAAGVVNA. Intrachain disulfides connect Cys49–Cys92 and Cys183–Cys192.

The protein belongs to the polysaccharide lyase 4 family.

It localises to the secreted. The enzyme catalyses Endotype eliminative cleavage of L-alpha-rhamnopyranosyl-(1-&gt;4)-alpha-D-galactopyranosyluronic acid bonds of rhamnogalacturonan I domains in ramified hairy regions of pectin leaving L-rhamnopyranose at the reducing end and 4-deoxy-4,5-unsaturated D-galactopyranosyluronic acid at the non-reducing end.. Functionally, pectinolytic enzymes consist of four classes of enzymes: pectin lyase, polygalacturonase, pectin methylesterase and rhamnogalacturonase. Degrades the rhamnogalacturonan I (RG-I) backbone of pectin. The chain is Rhamnogalacturonate lyase A (rglA) from Aspergillus niger.